We begin with the raw amino-acid sequence, 340 residues long: Hydroxyurea phosphotransferase (340 aa).

Asp-240 (proton acceptor) is an active-site residue.

This sequence belongs to the aminoglycoside phosphotransferase family.

Potential phosphotransferase that inactivates hydroxyurea by phosphorylation of the hydroxy group in the hydroxylamine moiety. This chain is Hydroxyurea phosphotransferase (hur), found in Kitasatospora aureofaciens (Streptomyces aureofaciens).